A 330-amino-acid polypeptide reads, in one-letter code: Probable aldo-keto reductase 6 (330 aa).

Y64 (proton donor) is an active-site residue. H132 contributes to the substrate binding site. Residue 211-221 (SPLGRGFLGLP) coordinates NADP(+).

The protein belongs to the aldo/keto reductase family.

This is Probable aldo-keto reductase 6 from Arabidopsis thaliana (Mouse-ear cress).